Consider the following 382-residue polypeptide: 8-amino-7-oxononanoate synthase (382 aa).

Arg-26 is a substrate binding site. Pyridoxal 5'-phosphate is bound at residue 104–105 (GY). His-129 contributes to the substrate binding site. Pyridoxal 5'-phosphate is bound by residues Ser-175, 200 to 203 (DEAH), and 232 to 235 (TLSK). Lys-235 is subject to N6-(pyridoxal phosphate)lysine. Residue Thr-345 coordinates substrate.

This sequence belongs to the class-II pyridoxal-phosphate-dependent aminotransferase family. BioF subfamily. Homodimer. The cofactor is pyridoxal 5'-phosphate.

The catalysed reaction is 6-carboxyhexanoyl-[ACP] + L-alanine + H(+) = (8S)-8-amino-7-oxononanoate + holo-[ACP] + CO2. It participates in cofactor biosynthesis; biotin biosynthesis. Functionally, catalyzes the decarboxylative condensation of pimeloyl-[acyl-carrier protein] and L-alanine to produce 8-amino-7-oxononanoate (AON), [acyl-carrier protein], and carbon dioxide. The protein is 8-amino-7-oxononanoate synthase of Mycobacterium sp. (strain KMS).